Here is a 652-residue protein sequence, read N- to C-terminus: MSEKIYPVAKPVESHALINKAEYQEWYAESVADPEQFWGKHGKRIDWFKPYTSVKDTSFTGDVSIKWFEDGETNVSYNCIDRHLATNGDQVAIIWEGDDPSLDRKITYRELYEHVCRMANVLKKHGVKKGDRVTIYMPMVPEAAYAMLACARIGAIHSVVFGGFSPEALGGRIVDCQSTFVITCDEGLRGGKPVPLKANVDKAIDIAARGHVMVKNVLVIRRTGSPLSWAPGRDLWHHEEAATVSADCPPEPMKAEDPLFILYTSGSTGKPKGVLHTTGGYLVYASMTHEYVFDYQHGDIYWCTADVGWVTGHSYIVYGPLANCATTLMFEGIPTFPDAGRFWDVIDKHKVNIFYTAPTAIRSLMGAGDDFVKRSSRSSLRLLGSVGEPINPEAWEWYYHTVGDGRCPVVDTWWQTETGGIMITPLPGATDLKPGSATRPFFGIRPELVDAEGKLIEGAADGNLCIADSWPGQARSVYGDHERFIQTYFSTYEGKYFTGDGCRRDADGYYWITGRVDDVLNVSGHRLGTAEVESALVSHHLVSEAAVVGYPHNIKGQGIYCYVTLMAGSEGSEELRQQLVKHVRAEIGPIASPDKIQFAPGLPKTRSGKIMRRILRKIAEDDFGSLGDTSTLADPAVVDDLIANRQNRAEAA.

Residues 189 to 192 and T311 contribute to the CoA site; that span reads RGGK. Residues 387–389, 411–416, D500, and R515 each bind ATP; these read GEP and DTWWQT. CoA is bound at residue S523. R526 contributes to the ATP binding site. The Mg(2+) site is built by V537, H539, and V542. Residue R584 participates in CoA binding. An N6-acetyllysine modification is found at K609.

The protein belongs to the ATP-dependent AMP-binding enzyme family. Requires Mg(2+) as cofactor. Post-translationally, acetylated. Deacetylation by the SIR2-homolog deacetylase activates the enzyme.

It catalyses the reaction acetate + ATP + CoA = acetyl-CoA + AMP + diphosphate. Its function is as follows. Catalyzes the conversion of acetate into acetyl-CoA (AcCoA), an essential intermediate at the junction of anabolic and catabolic pathways. AcsA undergoes a two-step reaction. In the first half reaction, AcsA combines acetate with ATP to form acetyl-adenylate (AcAMP) intermediate. In the second half reaction, it can then transfer the acetyl group from AcAMP to the sulfhydryl group of CoA, forming the product AcCoA. The protein is Acetyl-coenzyme A synthetase of Rhizobium rhizogenes (Agrobacterium rhizogenes).